The primary structure comprises 477 residues: MSELQSRTSPFSGGLFIKTYGCQMNEYDSDRMAKLLEKTYGLNLVETPEEADMLLLNTCSVREKAQEKVFDELGRWKKWKAAKPNRVIGVGGCVASQEGDVIRKRAPLVDVIFGPQTLHRLPAMIEEALALRTATEQDKKLKKRAIIDISFPEIEKFDNLAEPESNGVSAFVSVMEGCSKYCTFCVVPYTRGEEFSRPFSDVMAEIESLAKQGVREVNLLGQNVNAYRGEMPDGEMADLAVLIHAVRAVEGIDRIRFTTSHPNEMTQSLIDCYAEVPELVSHLHLPIQSGSDRVLAMMKRNHMAIEYKATIRKIKKIRPDLSLSGDFIIGFPGETCDDFKETLALVKEMNYDRSFSFIYSPRPGTPAASLPDDVELHMKKRRLQALQAMLNEQTAAISEGMVGTTQRVLVERLSRNSTNEVSGRTENNRVVNFEGPPELIGQFVDVLIEEAYANSLKGKLVATPEAEQFNQRQFYAL.

The region spanning 13-130 is the MTTase N-terminal domain; sequence GGLFIKTYGC…LPAMIEEALA (118 aa). [4Fe-4S] cluster-binding residues include Cys-22, Cys-59, Cys-93, Cys-178, Cys-182, and Cys-185. The Radical SAM core domain occupies 164–396; it reads ESNGVSAFVS…QAMLNEQTAA (233 aa). Residues 399 to 462 form the TRAM domain; the sequence is EGMVGTTQRV…ANSLKGKLVA (64 aa).

This sequence belongs to the methylthiotransferase family. MiaB subfamily. Monomer. The cofactor is [4Fe-4S] cluster.

The protein localises to the cytoplasm. It carries out the reaction N(6)-dimethylallyladenosine(37) in tRNA + (sulfur carrier)-SH + AH2 + 2 S-adenosyl-L-methionine = 2-methylsulfanyl-N(6)-dimethylallyladenosine(37) in tRNA + (sulfur carrier)-H + 5'-deoxyadenosine + L-methionine + A + S-adenosyl-L-homocysteine + 2 H(+). Functionally, catalyzes the methylthiolation of N6-(dimethylallyl)adenosine (i(6)A), leading to the formation of 2-methylthio-N6-(dimethylallyl)adenosine (ms(2)i(6)A) at position 37 in tRNAs that read codons beginning with uridine. The chain is tRNA-2-methylthio-N(6)-dimethylallyladenosine synthase from Hydrogenovibrio crunogenus (strain DSM 25203 / XCL-2) (Thiomicrospira crunogena).